A 572-amino-acid chain; its full sequence is E3 SUMO-protein ligase PIAS2 (572 aa).

One can recognise an SAP domain in the interval 11 to 45 (VSSFRVSELQVLLGFAGRNKSGRKHDLLMRALHLL). The LXXLL motif motif lies at 19–23 (LQVLL). Residues Lys46 and Lys249 each participate in a glycyl lysine isopeptide (Lys-Gly) (interchain with G-Cter in SUMO2) cross-link. The PINIT domain maps to 134-299 (QPSPPIPPVH…SMSVYLVRQL (166 aa)). The SP-RING-type zinc finger occupies 331 to 412 (PDSEIATTSL…FMEILNDCSD (82 aa)). Cys362, His364, Cys385, and Cys388 together coordinate Zn(2+). Glycyl lysine isopeptide (Lys-Gly) (interchain with G-Cter in SUMO2) cross-links involve residues Lys430, Lys435, Lys443, and Lys452. Residues 467–473 (IDVIDLT) form an SUMO1-binding region. Phosphoserine is present on residues Ser476, Ser477, and Ser478. The Nuclear localization signal signature appears at 484-492 (PPAKRKCIF). Residue Lys489 forms a Glycyl lysine isopeptide (Lys-Gly) (interchain with G-Cter in SUMO2) linkage. The residue at position 499 (Ser499) is a Phosphoserine. Lys502 participates in a covalent cross-link: Glycyl lysine isopeptide (Lys-Gly) (interchain with G-Cter in SUMO2). The disordered stretch occupies residues 523–572 (AAIPPSLTDYSVPFHHTPVSSMSSDLPGEQRRNDINNEVQLGTSSDTVQQ). Residues 558–572 (NNEVQLGTSSDTVQQ) show a composition bias toward polar residues.

This sequence belongs to the PIAS family. As to quaternary structure, binds SUMO1 and UBE2I. Interacts with AXIN1, JUN, MDM2, PARK7, TP53 and TP73 isoform alpha, but not TP73 isoform beta. Interacts with STAT4 following IL12 and IFN-alpha stimulation of T-cells. Interacts also with GTF2I, GTF2IRD1, IKFZ1, DAB2 and MSX2, as well as with several steroid receptors, including ESR1, ESR2, NR3C1, PGR, AR, and with NCOA2. Sumoylation of a target protein seems to enhance the interaction. Binds to sumoylated ELK1. Binds DNA, such as CDKN1A promoter, in a sequence-specific manner. Interacts with PLAG1. Interacts with KLF8; the interaction results in SUMO ligation and repression of KLF8 transcriptional activity and of its cell cycle progression into G(1) phase. Interacts with IFIH1/MDA5. Interacts with PML. Interacts with PRDM1. In terms of processing, sumoylated. Mainly expressed in testis.

It localises to the nucleus speckle. The protein resides in the nucleus. Its subcellular location is the PML body. Its pathway is protein modification; protein sumoylation. In terms of biological role, functions as an E3-type small ubiquitin-like modifier (SUMO) ligase, stabilizing the interaction between UBE2I and the substrate, and as a SUMO-tethering factor. Plays a crucial role as a transcriptional coregulation in various cellular pathways, including the STAT pathway, the p53 pathway and the steroid hormone signaling pathway. The effects of this transcriptional coregulation, transactivation or silencing may vary depending upon the biological context and PIAS2 isoform studied. However, it seems to be mostly involved in gene silencing. Binds to sumoylated ELK1 and enhances its transcriptional activity by preventing recruitment of HDAC2 by ELK1, thus reversing SUMO-mediated repression of ELK1 transactivation activity. Sumoylates PML at'Lys-65' and 'Lys-160'. In Rattus norvegicus (Rat), this protein is E3 SUMO-protein ligase PIAS2 (Pias2).